The sequence spans 429 residues: Ribosomal RNA small subunit methyltransferase B (429 aa).

S-adenosyl-L-methionine-binding positions include 254-260, Asp-277, Asp-303, and Asp-322; that span reads CAAPGGK. Cys-375 functions as the Nucleophile in the catalytic mechanism.

It belongs to the class I-like SAM-binding methyltransferase superfamily. RsmB/NOP family.

The protein localises to the cytoplasm. It catalyses the reaction cytidine(967) in 16S rRNA + S-adenosyl-L-methionine = 5-methylcytidine(967) in 16S rRNA + S-adenosyl-L-homocysteine + H(+). In terms of biological role, specifically methylates the cytosine at position 967 (m5C967) of 16S rRNA. This chain is Ribosomal RNA small subunit methyltransferase B, found in Shigella boydii serotype 18 (strain CDC 3083-94 / BS512).